We begin with the raw amino-acid sequence, 255 residues long: Leucyl/phenylalanyl-tRNA--protein transferase (255 aa).

Belongs to the L/F-transferase family.

It is found in the cytoplasm. The enzyme catalyses N-terminal L-lysyl-[protein] + L-leucyl-tRNA(Leu) = N-terminal L-leucyl-L-lysyl-[protein] + tRNA(Leu) + H(+). The catalysed reaction is N-terminal L-arginyl-[protein] + L-leucyl-tRNA(Leu) = N-terminal L-leucyl-L-arginyl-[protein] + tRNA(Leu) + H(+). It catalyses the reaction L-phenylalanyl-tRNA(Phe) + an N-terminal L-alpha-aminoacyl-[protein] = an N-terminal L-phenylalanyl-L-alpha-aminoacyl-[protein] + tRNA(Phe). Functionally, functions in the N-end rule pathway of protein degradation where it conjugates Leu, Phe and, less efficiently, Met from aminoacyl-tRNAs to the N-termini of proteins containing an N-terminal arginine or lysine. The polypeptide is Leucyl/phenylalanyl-tRNA--protein transferase (Burkholderia pseudomallei (strain 668)).